Reading from the N-terminus, the 386-residue chain is Glyceraldehyde-3-phosphate dehydrogenase, chloroplastic (386 aa).

The transit peptide at 1–45 (MAYFKAVAYLAALASAAAFNPGSSFVPRLNAPATQPKAAKMTGPT) directs the protein to the chloroplast. NADP(+) is bound by residues 58-59 (RI) and Arg125. D-glyceraldehyde 3-phosphate contacts are provided by residues 197 to 199 (SCT), Thr228, 257 to 258 (TG), and Arg280. The active-site Nucleophile is the Cys198. Asn362 contacts NADP(+).

It belongs to the glyceraldehyde-3-phosphate dehydrogenase family. As to quaternary structure, homotetramer.

The protein localises to the plastid. It is found in the chloroplast. It carries out the reaction D-glyceraldehyde 3-phosphate + phosphate + NADP(+) = (2R)-3-phospho-glyceroyl phosphate + NADPH + H(+). The catalysed reaction is D-glyceraldehyde 3-phosphate + phosphate + NAD(+) = (2R)-3-phospho-glyceroyl phosphate + NADH + H(+). It participates in carbohydrate biosynthesis; Calvin cycle. This is Glyceraldehyde-3-phosphate dehydrogenase, chloroplastic (GAPC1) from Guillardia theta (Cryptophyte).